The following is a 423-amino-acid chain: MGEEREATRTEYKLEMDSELRFEIENKNEKVTVTLMNGHAELFGTELVMRKPYEFGVGAKVAIFTYHGCTIELRGKPDVAYVARETPMVQYLNSNSALEHLRAKAEQDDTQGPVVMIVGPMDVGKTTLCRIFLNYAVRLGRRPIYVDLDVGQGGIAIPGTIGALLVERPAPVAEGFSQQAPLVYHFGHTSPSDNDVFYGVLISKLAETTLERLEANKKAKYSGMIINTCGWVKGGGYRHILHAIKAFEVNAVFVLDQERLYNELLRDVERAVQIVFLPKSGGVVERTKSQRAEARDNRVREYFYGSKMPLYPHSFDVKFSDVKIFKVGSPALPDSCLPLGMKREDNYTKLVAVQPGPQLLHHILAVSFAESTDDNVIQSNVAGFICVTNVSMEKEVLTILSPQPRPLPQTILLVSDFQFMDSH.

ATP contacts are provided by residues E19, K60, and 122-127; that span reads DVGKTT.

Belongs to the Clp1 family. Clp1 subfamily.

It is found in the nucleus. Required for endonucleolytic cleavage during polyadenylation-dependent pre-mRNA 3'-end formation. This Culex quinquefasciatus (Southern house mosquito) protein is Protein CLP1 homolog (cbc).